The sequence spans 388 residues: uncharacterized protein (388 aa).

8 consecutive transmembrane segments (helical) span residues 15 to 37 (VISAFLSISLFEGFVILTLLLVL), 97 to 119 (GFSKIFPKLLLGISLILLPVVFY), 129 to 151 (PIWGGTFEVGFFYALFSITTFLL), 158 to 175 (FIYIPLFLLFLAVIFLSA), 179 to 196 (MMLAFFVIFYLILFVLFK), 203 to 225 (LAFWSVNFLIILSFIGGYVYLSQ), 304 to 326 (IFIVSEFIERGILGLLGILYIYF), and 347 to 369 (LLSVPLGLHLIQSVFTFFWDALL).

Its subcellular location is the cell membrane. This is an uncharacterized protein from Aquifex aeolicus (strain VF5).